We begin with the raw amino-acid sequence, 172 residues long: Crossover junction endodeoxyribonuclease RuvC (172 aa).

Residues aspartate 11, glutamate 70, and aspartate 142 contribute to the active site. Aspartate 11, glutamate 70, and aspartate 142 together coordinate Mg(2+).

Belongs to the RuvC family. Homodimer which binds Holliday junction (HJ) DNA. The HJ becomes 2-fold symmetrical on binding to RuvC with unstacked arms; it has a different conformation from HJ DNA in complex with RuvA. In the full resolvosome a probable DNA-RuvA(4)-RuvB(12)-RuvC(2) complex forms which resolves the HJ. The cofactor is Mg(2+).

The protein resides in the cytoplasm. The enzyme catalyses Endonucleolytic cleavage at a junction such as a reciprocal single-stranded crossover between two homologous DNA duplexes (Holliday junction).. The RuvA-RuvB-RuvC complex processes Holliday junction (HJ) DNA during genetic recombination and DNA repair. Endonuclease that resolves HJ intermediates. Cleaves cruciform DNA by making single-stranded nicks across the HJ at symmetrical positions within the homologous arms, yielding a 5'-phosphate and a 3'-hydroxyl group; requires a central core of homology in the junction. The consensus cleavage sequence is 5'-(A/T)TT(C/G)-3'. Cleavage occurs on the 3'-side of the TT dinucleotide at the point of strand exchange. HJ branch migration catalyzed by RuvA-RuvB allows RuvC to scan DNA until it finds its consensus sequence, where it cleaves and resolves the cruciform DNA. The chain is Crossover junction endodeoxyribonuclease RuvC from Hydrogenovibrio crunogenus (strain DSM 25203 / XCL-2) (Thiomicrospira crunogena).